A 450-amino-acid polypeptide reads, in one-letter code: tRNA modification GTPase MnmE (450 aa).

Residues arginine 23, glutamate 80, and arginine 123 each coordinate (6S)-5-formyl-5,6,7,8-tetrahydrofolate. In terms of domain architecture, TrmE-type G spans 219-372 (GLHVVLAGKP…LRQRLLQLAG (154 aa)). Asparagine 229 is a K(+) binding site. GTP-binding positions include 229-234 (NVGKSS), 248-254 (TPIAGTT), 273-276 (DTAG), and 353-355 (SAR). Position 233 (serine 233) interacts with Mg(2+). Residues threonine 248, isoleucine 250, and threonine 253 each contribute to the K(+) site. Threonine 254 contacts Mg(2+). Lysine 450 is a binding site for (6S)-5-formyl-5,6,7,8-tetrahydrofolate.

This sequence belongs to the TRAFAC class TrmE-Era-EngA-EngB-Septin-like GTPase superfamily. TrmE GTPase family. As to quaternary structure, homodimer. Heterotetramer of two MnmE and two MnmG subunits. K(+) serves as cofactor.

It is found in the cytoplasm. Its function is as follows. Exhibits a very high intrinsic GTPase hydrolysis rate. Involved in the addition of a carboxymethylaminomethyl (cmnm) group at the wobble position (U34) of certain tRNAs, forming tRNA-cmnm(5)s(2)U34. This is tRNA modification GTPase MnmE from Bordetella parapertussis (strain 12822 / ATCC BAA-587 / NCTC 13253).